We begin with the raw amino-acid sequence, 436 residues long: tRNA(Ile)-lysidine synthase (436 aa).

ATP is bound at residue 25 to 30; sequence SGGLDS.

This sequence belongs to the tRNA(Ile)-lysidine synthase family.

The protein resides in the cytoplasm. It carries out the reaction cytidine(34) in tRNA(Ile2) + L-lysine + ATP = lysidine(34) in tRNA(Ile2) + AMP + diphosphate + H(+). Functionally, ligates lysine onto the cytidine present at position 34 of the AUA codon-specific tRNA(Ile) that contains the anticodon CAU, in an ATP-dependent manner. Cytidine is converted to lysidine, thus changing the amino acid specificity of the tRNA from methionine to isoleucine. This chain is tRNA(Ile)-lysidine synthase, found in Serratia proteamaculans (strain 568).